The primary structure comprises 382 residues: Polyadenylate-binding protein 5 (382 aa).

4 RRM domains span residues 18-96 (AALY…WSQP), 106-182 (GNIF…RFKF), 199-276 (TNVF…RAQK), and 302-378 (VPIY…LGQA).

The protein resides in the cytoplasm. Its function is as follows. Binds the poly(A) tail of mRNA. May be involved in cytoplasmic regulatory processes of mRNA metabolism. Can probably bind to cytoplasmic RNA sequences other than poly(A) in vivo. The sequence is that of Polyadenylate-binding protein 5 (PABPC5) from Macaca mulatta (Rhesus macaque).